The following is a 227-amino-acid chain: Probable septum site-determining protein MinC (227 aa).

Belongs to the MinC family. Interacts with MinD and FtsZ.

Cell division inhibitor that blocks the formation of polar Z ring septums. Rapidly oscillates between the poles of the cell to destabilize FtsZ filaments that have formed before they mature into polar Z rings. Prevents FtsZ polymerization. The polypeptide is Probable septum site-determining protein MinC (Laribacter hongkongensis (strain HLHK9)).